The primary structure comprises 196 residues: Pyridoxal 5'-phosphate synthase subunit PdxT (196 aa).

46 to 48 (GES) serves as a coordination point for L-glutamine. The active-site Nucleophile is the Cys-78. L-glutamine is bound by residues Arg-110 and 138–139 (IR). Catalysis depends on charge relay system residues His-174 and Glu-176.

The protein belongs to the glutaminase PdxT/SNO family. In terms of assembly, in the presence of PdxS, forms a dodecamer of heterodimers. Only shows activity in the heterodimer.

It carries out the reaction aldehydo-D-ribose 5-phosphate + D-glyceraldehyde 3-phosphate + L-glutamine = pyridoxal 5'-phosphate + L-glutamate + phosphate + 3 H2O + H(+). The catalysed reaction is L-glutamine + H2O = L-glutamate + NH4(+). It participates in cofactor biosynthesis; pyridoxal 5'-phosphate biosynthesis. Catalyzes the hydrolysis of glutamine to glutamate and ammonia as part of the biosynthesis of pyridoxal 5'-phosphate. The resulting ammonia molecule is channeled to the active site of PdxS. This chain is Pyridoxal 5'-phosphate synthase subunit PdxT, found in Deinococcus radiodurans (strain ATCC 13939 / DSM 20539 / JCM 16871 / CCUG 27074 / LMG 4051 / NBRC 15346 / NCIMB 9279 / VKM B-1422 / R1).